We begin with the raw amino-acid sequence, 49 residues long: Large ribosomal subunit protein bL33A (49 aa).

It belongs to the bacterial ribosomal protein bL33 family.

The polypeptide is Large ribosomal subunit protein bL33A (Latilactobacillus sakei subsp. sakei (strain 23K) (Lactobacillus sakei subsp. sakei)).